The sequence spans 105 residues: Flagellar transcriptional regulator FlhD (105 aa).

This sequence belongs to the FlhD family. In terms of assembly, homodimer; disulfide-linked. Forms a heterohexamer composed of two FlhC and four FlhD subunits. Each FlhC binds a FlhD dimer, forming a heterotrimer, and a hexamer assembles by dimerization of two heterotrimers.

It localises to the cytoplasm. Functionally, functions in complex with FlhC as a master transcriptional regulator that regulates transcription of several flagellar and non-flagellar operons by binding to their promoter region. Activates expression of class 2 flagellar genes, including fliA, which is a flagellum-specific sigma factor that turns on the class 3 genes. Also regulates genes whose products function in a variety of physiological pathways. The polypeptide is Flagellar transcriptional regulator FlhD (Ralstonia nicotianae (strain ATCC BAA-1114 / GMI1000) (Ralstonia solanacearum)).